The primary structure comprises 297 residues: Polyketide transferase ATR5 (297 aa).

Positions 49-272 are abhydrolase domain; sequence DVAVWFQKRG…FVLAENKGHM (224 aa).

This sequence belongs to the polyketide transferase af380 family.

It functions in the pathway mycotoxin biosynthesis. Its function is as follows. Polyketide transferase; part of the core atranone cluster (CAC) which products are predicted to catalyze most or all steps of atranone synthesis, starting from geranylgeranyl pyrophosphate (GGPP). The initial cyclization of GGPP to dolabellane is probably performed by the terpene cyclase ATR13. The Baeyer-Villiger oxidation near the end of the atranone synthesis, which converts atranones D and E to atranones F and G is predicted to be catalyzed by the monooxygenase ATR8. Of the CAC's other predicted gene products, the reducing PKS ATR6 might synthesize a polyketide chain. This polyketide is probably transferred onto the atranone backbone by the polyketide transferase ATR5. Other predicted CAC products include 4 oxygenases (ATR2, ATR3, ATR4, and ATR14), 3 short-chain reductases (ATR7, ATR9, and ATR10), and a methyltransferase (ATR12). These may all be involved in the various steps of atranone biosynthesis, although their specific roles must await experimental determination. The sequence is that of Polyketide transferase ATR5 from Stachybotrys chlorohalonatus (strain IBT 40285).